A 334-amino-acid chain; its full sequence is Biotin synthase (334 aa).

In terms of domain architecture, Radical SAM core spans 55 to 280; the sequence is EEIEVEGIIS…HTMLRFAGGR (226 aa). [4Fe-4S] cluster contacts are provided by cysteine 70, cysteine 74, and cysteine 77. [2Fe-2S] cluster contacts are provided by cysteine 113, cysteine 205, and arginine 275.

This sequence belongs to the radical SAM superfamily. Biotin synthase family. Homodimer. It depends on [4Fe-4S] cluster as a cofactor. Requires [2Fe-2S] cluster as cofactor.

The catalysed reaction is (4R,5S)-dethiobiotin + (sulfur carrier)-SH + 2 reduced [2Fe-2S]-[ferredoxin] + 2 S-adenosyl-L-methionine = (sulfur carrier)-H + biotin + 2 5'-deoxyadenosine + 2 L-methionine + 2 oxidized [2Fe-2S]-[ferredoxin]. The protein operates within cofactor biosynthesis; biotin biosynthesis; biotin from 7,8-diaminononanoate: step 2/2. In terms of biological role, catalyzes the conversion of dethiobiotin (DTB) to biotin by the insertion of a sulfur atom into dethiobiotin via a radical-based mechanism. The protein is Biotin synthase of Corynebacterium glutamicum (strain ATCC 13032 / DSM 20300 / JCM 1318 / BCRC 11384 / CCUG 27702 / LMG 3730 / NBRC 12168 / NCIMB 10025 / NRRL B-2784 / 534).